The following is a 327-amino-acid chain: Carboxylesterase 20 (327 aa).

An Involved in the stabilization of the negatively charged intermediate by the formation of the oxyanion hole motif is present at residues His87–Gly89. Ser166 (nucleophile) is an active-site residue. Active-site residues include Asp272 and His302.

The protein belongs to the 'GDXG' lipolytic enzyme family. Expressed in roots, stems, flowers and siliques.

It catalyses the reaction a carboxylic ester + H2O = an alcohol + a carboxylate + H(+). Esterase activity measured in vitro with the synthetic substrate p-nitrophenyl acetate (pNPA) is inhibited by strigolactone. Carboxylesterase that possesses esterase activity in vitro with the synthetic substrate p-nitrophenyl acetate (pNPA). Binds strigolactones, but is not able to hydrolyze them. May be involved in the regulation of shoot branching. The chain is Carboxylesterase 20 from Arabidopsis thaliana (Mouse-ear cress).